A 118-amino-acid polypeptide reads, in one-letter code: MARVKRGVVAHAKHKKVLEQAKGFYGRRKNTIRAAKAAVDKAGQYAYRDRKVRKRNFRSLWIQRINAAARLEGFTYSRFIFGLEKAGIEMDRKVLADIAGNDPAGFKAIADKVRAALA.

It belongs to the bacterial ribosomal protein bL20 family.

Its function is as follows. Binds directly to 23S ribosomal RNA and is necessary for the in vitro assembly process of the 50S ribosomal subunit. It is not involved in the protein synthesizing functions of that subunit. In Phenylobacterium zucineum (strain HLK1), this protein is Large ribosomal subunit protein bL20.